Reading from the N-terminus, the 313-residue chain is Potassium channel subfamily K member 6 (313 aa).

At 1–4 (MRRG) the chain is on the cytoplasmic side. The chain crosses the membrane as a helical span at residues 5-25 (ALLAGALAAYAAYLVLGALLV). Residues N79 and N85 are each glycosylated (N-linked (GlcNAc...) asparagine). Residues 90 to 115 (AWDFASALFFASTLITTVGYGYTTPL) constitute an intramembrane region (pore-forming). K(+) contacts are provided by T106, V107, G108, and Y109. Positions 106 to 111 (TVGYGY) are selectivity filter 1. Residues 121-141 (AFSIAFALLGVPTTMLLLTAS) traverse the membrane as a helical segment. Residues 142–172 (AQRLSLLLTHVPLSWLSMRWGWDPRRAACWH) lie on the Cytoplasmic side of the membrane. Residues 173–193 (LVALLGVVVTVCFLVPAVIFA) form a helical membrane-spanning segment. Positions 199–223 (WSFLDAFYFCFISLSTIGLGDYVPG) form an intramembrane region, pore-forming. Residues T214, I215, and G216 each contribute to the K(+) site. Residues 214–219 (TIGLGD) are selectivity filter 2. The helical transmembrane segment at 236-256 (VLVTVYLFLGLVAMVLVLQTF) threads the bilayer. The Cytoplasmic segment spans residues 257-313 (RHVSDLHGLTELILLPPPCPASFNADEDDRVDILGPQPESHQQLSASSHTDYASIPR). The short motif at 282–290 (DEDDRVDIL) is the Lysosomal targeting signal element. Positions 288-313 (DILGPQPESHQQLSASSHTDYASIPR) are disordered. The segment covering 295 to 307 (ESHQQLSASSHTD) has biased composition (polar residues). The Lysosomal targeting signal motif lies at 308-312 (YASIP).

The protein belongs to the two pore domain potassium channel (TC 1.A.1.8) family. In terms of assembly, homodimer; disulfide-linked. Post-translationally, N-glycosylation is necessary for targeting to lysosomes. As to expression, widespread expression, detected in all tissues tested except for skeletal muscle. Strongest expression in placenta, pancreas, heart, colon and spleen, lower levels detected in peripheral blood leukocytes, lung, liver, kidney and thymus. Lowest expression detected in brain.

The protein localises to the late endosome membrane. Its subcellular location is the lysosome membrane. The enzyme catalyses K(+)(in) = K(+)(out). Its function is as follows. K(+) channel that conducts outward rectifying currents at the membranes of the endolysosomal system. Active in lysosomes where it regulates lysosome numbers and size. In macrophages, enables K(+) efflux coupled to ATP-induced NLRP3 inflammasome activation upon bacterial infection. Cooperates with ATP-gated P2RX7 channels to activate NLRP3 inflammasome, with P2RX7 conducting Ca(2+) and Na(+) influx that sets the membrane potential for K(+) efflux. In terms of biological role, does not display channel activity. This Homo sapiens (Human) protein is Potassium channel subfamily K member 6.